A 234-amino-acid chain; its full sequence is Adenosine 5'-phosphosulfate reductase (234 aa).

The [4Fe-4S] cluster site is built by Cys120, Cys121, Cys203, and Cys206. The active-site Nucleophile; cysteine thiosulfonate intermediate is Cys229.

Belongs to the PAPS reductase family. CysH subfamily. [4Fe-4S] cluster is required as a cofactor.

It localises to the cytoplasm. It catalyses the reaction [thioredoxin]-disulfide + sulfite + AMP + 2 H(+) = adenosine 5'-phosphosulfate + [thioredoxin]-dithiol. It participates in sulfur metabolism; hydrogen sulfide biosynthesis; sulfite from sulfate. Catalyzes the formation of sulfite from adenosine 5'-phosphosulfate (APS) using thioredoxin as an electron donor. This Bacillus cereus (strain Q1) protein is Adenosine 5'-phosphosulfate reductase.